Reading from the N-terminus, the 692-residue chain is Meiotic sister-chromatid recombination protein 6, mitochondrial (692 aa).

Residues 1-30 (MLSHNALRAFDCSKVIISRRCLTSSTSIYQ) constitute a mitochondrion transit peptide.

It is found in the mitochondrion. Functionally, may be involved in the control of meiotic sister-chromatid recombination. The polypeptide is Meiotic sister-chromatid recombination protein 6, mitochondrial (MSC6) (Saccharomyces cerevisiae (strain ATCC 204508 / S288c) (Baker's yeast)).